The chain runs to 104 residues: MSNGPLAPGYDSDILVEDDVRLPRMYRVLLHNDDYTTMEFVVSILVEVFRKTAEQATAIMLAVHRDGVGECGVYTFEVAETKAAIVHARARREGYPLRCSTEEV.

This sequence belongs to the ClpS family. Binds to the N-terminal domain of the chaperone ClpA.

Involved in the modulation of the specificity of the ClpAP-mediated ATP-dependent protein degradation. The sequence is that of ATP-dependent Clp protease adapter protein ClpS from Nitratidesulfovibrio vulgaris (strain ATCC 29579 / DSM 644 / CCUG 34227 / NCIMB 8303 / VKM B-1760 / Hildenborough) (Desulfovibrio vulgaris).